The following is a 120-amino-acid chain: Large ribosomal subunit protein uL22 (120 aa).

Positions M1–R22 are disordered.

Belongs to the universal ribosomal protein uL22 family. As to quaternary structure, part of the 50S ribosomal subunit.

This protein binds specifically to 23S rRNA; its binding is stimulated by other ribosomal proteins, e.g. L4, L17, and L20. It is important during the early stages of 50S assembly. It makes multiple contacts with different domains of the 23S rRNA in the assembled 50S subunit and ribosome. In terms of biological role, the globular domain of the protein is located near the polypeptide exit tunnel on the outside of the subunit, while an extended beta-hairpin is found that lines the wall of the exit tunnel in the center of the 70S ribosome. This Borreliella burgdorferi (strain ATCC 35210 / DSM 4680 / CIP 102532 / B31) (Borrelia burgdorferi) protein is Large ribosomal subunit protein uL22.